The sequence spans 813 residues: Lon protease (813 aa).

Residues 30-225 (LPILPVRNIV…WLLQLMDKDI (196 aa)) form the Lon N-terminal domain. Residue 376–383 (GPPGVGKT) coordinates ATP. The Lon proteolytic domain occupies 612–793 (DDLAGIVTGL…DEVLAIALLK (182 aa)). Active-site residues include S699 and K742.

The protein belongs to the peptidase S16 family. As to quaternary structure, homohexamer. Organized in a ring with a central cavity.

Its subcellular location is the cytoplasm. The enzyme catalyses Hydrolysis of proteins in presence of ATP.. Functionally, ATP-dependent serine protease that mediates the selective degradation of mutant and abnormal proteins as well as certain short-lived regulatory proteins. Required for cellular homeostasis and for survival from DNA damage and developmental changes induced by stress. Degrades polypeptides processively to yield small peptide fragments that are 5 to 10 amino acids long. Binds to DNA in a double-stranded, site-specific manner. The chain is Lon protease from Cytophaga hutchinsonii (strain ATCC 33406 / DSM 1761 / CIP 103989 / NBRC 15051 / NCIMB 9469 / D465).